The primary structure comprises 896 residues: Echinoderm microtubule-associated protein-like 3 (896 aa).

Met-1 carries the N-acetylmethionine modification. The stretch at 16 to 43 (LQSLSQRLRVQEQEMELVKAALAEALRL) forms a coiled coil. The interval 50-209 (PSSLQGSGTP…GGPGSRRSNY (160 aa)) is disordered. Residues 77-88 (TPSLVSRGTQTE) show a composition bias toward polar residues. Pro residues predominate over residues 134-145 (PGPPGILRPLQP). A compositionally biased stretch (low complexity) spans 154 to 163 (RNSSSSSSPS). The span at 174-189 (AISSANLLVRSGSTES) shows a compositional bias: polar residues. A phosphoserine mark is found at Ser-176, Ser-198, and Ser-204. WD repeat units lie at residues 234 to 286 (RSLE…LYRP), 295 to 344 (GGGQ…IWDS), 350 to 392 (LQEI…VWDC), 398 to 434 (LAEI…FWNW), 448 to 487 (RKQG…TWGR), 504 to 543 (YGIV…QWGP), 549 to 584 (QEAE…LRGD), 589 to 626 (FSPV…LWDG), 629 to 667 (HALA…VLDT), 674 to 709 (SDVI…IYSV), 716 to 755 (SSRF…YWDV), 765 to 823 (RYES…LFQY), and 830 to 869 (APSR…QWRV). The segment at 876–896 (GPAPATPSRTPSLSPASSLDV) is disordered. Positions 877–896 (PAPATPSRTPSLSPASSLDV) are enriched in low complexity. Residue Thr-881 is modified to Phosphothreonine; by CDK1. The residue at position 883 (Ser-883) is a Phosphoserine.

This sequence belongs to the WD repeat EMAP family. In terms of assembly, homotrimer; self-association is mediated by the N-terminal coiled coil. Interacts with EML2 but not with EML1. Interacts (phosphorylated at Thr-881) with TUBG1, HAUS1, HAUS2, HAUS3, HAUS4, HAUS5, HAUS6, HAUS7 and HAUS8. Phosphorylation at Thr-881 during mitosis is required for interaction with TUBG1, HAUS1, HAUS2, HAUS3, HAUS4, HAUS5, HAUS6, HAUS7 and HAUS8 and their recruitment to spindle microtubules.

It is found in the cytoplasm. The protein resides in the cytoskeleton. It localises to the nucleus. The protein localises to the midbody. Its subcellular location is the spindle. Functionally, regulates mitotic spindle assembly, microtubule (MT)-kinetochore attachment and chromosome separation via recruitment of HAUS augmin-like complex and TUBG1 to the existing MTs and promoting MT-based MT nucleation. Required for proper alignnment of chromosomes during metaphase. This is Echinoderm microtubule-associated protein-like 3 (EML3) from Homo sapiens (Human).